A 122-amino-acid polypeptide reads, in one-letter code: Urease subunit beta (122 aa).

It belongs to the urease beta subunit family. As to quaternary structure, heterotrimer of UreA (gamma), UreB (beta) and UreC (alpha) subunits. Three heterotrimers associate to form the active enzyme.

The protein resides in the cytoplasm. It carries out the reaction urea + 2 H2O + H(+) = hydrogencarbonate + 2 NH4(+). The protein operates within nitrogen metabolism; urea degradation; CO(2) and NH(3) from urea (urease route): step 1/1. The sequence is that of Urease subunit beta from Acetivibrio thermocellus (strain ATCC 27405 / DSM 1237 / JCM 9322 / NBRC 103400 / NCIMB 10682 / NRRL B-4536 / VPI 7372) (Clostridium thermocellum).